The sequence spans 306 residues: D-glucosamine-6-phosphate 4-epimerase (306 aa).

Residues 19-153 (DIPGVKTAEK…TGSNYRVQDL (135 aa)) form the SIS domain. Glutamate 200 (proton acceptor) is an active-site residue. Catalysis depends on histidine 216, which acts as the Proton donor. The active-site Proton acceptor is arginine 296.

Belongs to the PGI/PMI family.

The catalysed reaction is D-glucosamine 6-phosphate = D-galactosamine 6-phosphate. Involved in the synthesis of UDP-N-acetylgalactosamine (UDP-GalNAc). Catalyzes the conversion of glucosamine-6-phosphate (GlcN-6-P) to galactosamine-6-phosphate (GalN-6-P). The protein is D-glucosamine-6-phosphate 4-epimerase of Sulfolobus acidocaldarius (strain ATCC 33909 / DSM 639 / JCM 8929 / NBRC 15157 / NCIMB 11770).